The following is a 118-amino-acid chain: uncharacterized protein (118 aa).

The signal sequence occupies residues 1–26 (MTKLKMLSMLTVMIASLFIFSSQALA). The SH3b domain occupies 30-104 (FTVSTSSGAP…VNIGYVSDTY (75 aa)).

This sequence to B.subtilis YraI.

This is an uncharacterized protein from Bacillus subtilis (strain 168).